A 455-amino-acid chain; its full sequence is Nucleoside-triphosphatase (455 aa).

Glu-168 acts as the Proton acceptor in catalysis.

It belongs to the GDA1/CD39 NTPase family.

It localises to the nucleus. It catalyses the reaction a ribonucleoside 5'-triphosphate + H2O = a ribonucleoside 5'-diphosphate + phosphate + H(+). Functionally, might be involved in RNA transport out of nuclei. This Pisum sativum (Garden pea) protein is Nucleoside-triphosphatase.